The following is a 313-amino-acid chain: Porphobilinogen deaminase (313 aa).

Residue Cys242 is modified to S-(dipyrrolylmethanemethyl)cysteine.

This sequence belongs to the HMBS family. As to quaternary structure, monomer. The cofactor is dipyrromethane.

It carries out the reaction 4 porphobilinogen + H2O = hydroxymethylbilane + 4 NH4(+). It functions in the pathway porphyrin-containing compound metabolism; protoporphyrin-IX biosynthesis; coproporphyrinogen-III from 5-aminolevulinate: step 2/4. In terms of biological role, tetrapolymerization of the monopyrrole PBG into the hydroxymethylbilane pre-uroporphyrinogen in several discrete steps. This is Porphobilinogen deaminase from Pseudomonas aeruginosa (strain UCBPP-PA14).